We begin with the raw amino-acid sequence, 260 residues long: OCIA domain-containing protein 1 (260 aa).

Residues 1 to 110 (MDSPLSDGSR…MRLPNSRLGE (110 aa)) enclose the OCIA domain. A disordered region spans residues 146–260 (DVYTDEGLNP…KNKYGDSWQD (115 aa)). Positions 155-164 (PSRSTALNLD) are enriched in polar residues. Basic and acidic residues predominate over residues 205-215 (EDLRKKNREGY).

The protein belongs to the OCIAD1 family.

The chain is OCIA domain-containing protein 1 from Drosophila pseudoobscura pseudoobscura (Fruit fly).